We begin with the raw amino-acid sequence, 204 residues long: Ribosome maturation factor RimP (204 aa).

The protein belongs to the RimP family.

It localises to the cytoplasm. Its function is as follows. Required for maturation of 30S ribosomal subunits. In Allorhizobium ampelinum (strain ATCC BAA-846 / DSM 112012 / S4) (Agrobacterium vitis (strain S4)), this protein is Ribosome maturation factor RimP.